The following is a 344-amino-acid chain: Zinc transporter 9 (344 aa).

A helical transmembrane segment spans residues 1–21; sequence MASILISGAAGVSIPLVGTLL. Topologically, residues 22–30 are cytoplasmic; sequence PLNGGLMRG. The helical transmembrane segment at 31-51 threads the bilayer; the sequence is AKAFAAGVILATGFVHMLSGG. The Extracellular segment spans residues 52-72; that stretch reads SKALSDPCLPEFPWKMFPFPE. A helical transmembrane segment spans residues 73–93; sequence FFAMVAALLTLLADFMITGYY. Over 94–188 the chain is Cytoplasmic; that stretch reads ERKQEKMMNQ…DVGLDSGVRH (95 aa). A helical transmembrane segment spans residues 189 to 209; sequence VVVSQILEMGIVSHSIIIGIS. At 210-221 the chain is on the extracellular side; the sequence is LGVSHSPCTIRP. The chain crosses the membrane as a helical span at residues 222-242; that stretch reads LLLALSFHQFFEGFALGGCVA. The Cytoplasmic portion of the chain corresponds to 243 to 251; sequence EARLTPRGS. Residues 252–272 form a helical membrane-spanning segment; the sequence is AMMAFFFAITTPIGVAVGTAI. Residues 273-291 lie on the Extracellular side of the membrane; the sequence is ASSYNSYSVAALVAEGVLD. Residues 292–312 form a helical membrane-spanning segment; that stretch reads SLSAGILVYMALVDLIAADFL. The Cytoplasmic portion of the chain corresponds to 313 to 323; sequence SKKMSVDFRVQ. A helical transmembrane segment spans residues 324–344; that stretch reads VVSYCFLFLGAGMMSALAIWA.

The protein belongs to the ZIP transporter (TC 2.A.5) family.

The protein localises to the cell membrane. Zinc transporter involved in zinc uptake in roots. Targeted by BZIP19 transcription factor in response to zinc-deficient conditions. In Arabidopsis thaliana (Mouse-ear cress), this protein is Zinc transporter 9 (ZIP9).